Reading from the N-terminus, the 698-residue chain is Glycine--tRNA ligase beta subunit (698 aa).

It belongs to the class-II aminoacyl-tRNA synthetase family. In terms of assembly, tetramer of two alpha and two beta subunits.

Its subcellular location is the cytoplasm. It carries out the reaction tRNA(Gly) + glycine + ATP = glycyl-tRNA(Gly) + AMP + diphosphate. In Xanthomonas campestris pv. campestris (strain B100), this protein is Glycine--tRNA ligase beta subunit.